Reading from the N-terminus, the 65-residue chain is Photosystem II reaction center protein J (65 aa).

The chain crosses the membrane as a helical span at residues 35-55 (LWLVATAGGTAVIFVLGIFFY).

The protein belongs to the PsbJ family. PSII is composed of 1 copy each of membrane proteins PsbA, PsbB, PsbC, PsbD, PsbE, PsbF, PsbH, PsbI, PsbJ, PsbK, PsbL, PsbM, PsbT, PsbX, PsbY, Psb30/Ycf12, peripheral proteins PsbO, CyanoQ (PsbQ), PsbU, PsbV and a large number of cofactors. It forms dimeric complexes.

It localises to the cellular thylakoid membrane. Its function is as follows. One of the components of the core complex of photosystem II (PSII). PSII is a light-driven water:plastoquinone oxidoreductase that uses light energy to abstract electrons from H(2)O, generating O(2) and a proton gradient subsequently used for ATP formation. It consists of a core antenna complex that captures photons, and an electron transfer chain that converts photonic excitation into a charge separation. This Prochlorococcus marinus (strain NATL1A) protein is Photosystem II reaction center protein J.